We begin with the raw amino-acid sequence, 299 residues long: Recombination-associated protein RdgC (299 aa).

It belongs to the RdgC family.

Its subcellular location is the cytoplasm. It is found in the nucleoid. Its function is as follows. May be involved in recombination. The protein is Recombination-associated protein RdgC of Neisseria meningitidis serogroup A / serotype 4A (strain DSM 15465 / Z2491).